Consider the following 312-residue polypeptide: Large ribosomal subunit protein uL10 (312 aa).

Residue K14 forms a Glycyl lysine isopeptide (Lys-Gly) (interchain with G-Cter in ubiquitin) linkage. Phosphoserine is present on S68. Residues K97 and K144 each participate in a glycyl lysine isopeptide (Lys-Gly) (interchain with G-Cter in ubiquitin) cross-link. The interval 199 to 230 (SSILDITDEELVSHFVSAVSTIASISLAIGYP) is interaction with P1A-P2B. Residues 231–258 (TLPSVGHTLINNYKDLLAVAIAASYHYP) are interaction with P1B-P2A. A compositionally biased stretch (low complexity) spans 278 to 293 (PAATSAASGDAAPAEE). A disordered region spans residues 278–312 (PAATSAASGDAAPAEEAAAEEEEESDDDMGFGLFD). Residues 294-306 (AAAEEEEESDDDM) show a composition bias toward acidic residues. S302 is subject to Phosphoserine; by CK2.

This sequence belongs to the universal ribosomal protein uL10 family. As to quaternary structure, component of the large ribosomal subunit (LSU). Mature yeast ribosomes consist of a small (40S) and a large (60S) subunit. The 40S small subunit contains 1 molecule of ribosomal RNA (18S rRNA) and 33 different proteins (encoded by 57 genes). The large 60S subunit contains 3 rRNA molecules (25S, 5.8S and 5S rRNA) and 46 different proteins (encoded by 81 genes). The 5 acidic ribosomal P-proteins form the stalk structure of the 60S subunit. They are organized as a pentameric complex in which uL10/P0 interacts with 2 heterodimers, P1A-P2B and P1B-P2A. uL10 directly interacts with 28S rRNA. uL10 interacts with YFL034W.

It localises to the cytoplasm. Component of the ribosome, a large ribonucleoprotein complex responsible for the synthesis of proteins in the cell. The small ribosomal subunit (SSU) binds messenger RNAs (mRNAs) and translates the encoded message by selecting cognate aminoacyl-transfer RNA (tRNA) molecules. The large subunit (LSU) contains the ribosomal catalytic site termed the peptidyl transferase center (PTC), which catalyzes the formation of peptide bonds, thereby polymerizing the amino acids delivered by tRNAs into a polypeptide chain. The nascent polypeptides leave the ribosome through a tunnel in the LSU and interact with protein factors that function in enzymatic processing, targeting, and the membrane insertion of nascent chains at the exit of the ribosomal tunnel. uL10 forms part of the P stalk that participates in recruiting G proteins to the ribosome. This Saccharomyces cerevisiae (strain ATCC 204508 / S288c) (Baker's yeast) protein is Large ribosomal subunit protein uL10.